The following is a 249-amino-acid chain: MQSSLHALPVLQDNVLWIWVRGDEAAVVDPAVAEPVIDWLQQRQLQLSAVLQTHHHADHIGGTPGLLERWPDAAVVAAGADRSRIPFQTISVSDGDQVTVLGRSLQVLDVAAHTSAHIAFVIPEQEDPDLGPVVFCGDTLFSGGCGRLFEGTPADMHRALRRLSELPESTKVCCAHEYTEGNLLWAIQQQPQDAAIRQRYDAVVDLRRRGELSLPSSIGEERRSNLFMRAASAEELGRLRRHKDHWRAA.

The Zn(2+) site is built by histidine 54, histidine 56, aspartate 58, histidine 59, histidine 113, aspartate 138, and histidine 176.

This sequence belongs to the metallo-beta-lactamase superfamily. Glyoxalase II family. In terms of assembly, monomer. Zn(2+) serves as cofactor.

It carries out the reaction an S-(2-hydroxyacyl)glutathione + H2O = a 2-hydroxy carboxylate + glutathione + H(+). It participates in secondary metabolite metabolism; methylglyoxal degradation; (R)-lactate from methylglyoxal: step 2/2. Functionally, thiolesterase that catalyzes the hydrolysis of S-D-lactoyl-glutathione to form glutathione and D-lactic acid. This is Hydroxyacylglutathione hydrolase from Parasynechococcus marenigrum (strain WH8102).